The chain runs to 265 residues: NAD kinase (265 aa).

Asp45 (proton acceptor) is an active-site residue. Residues 45–46, 122–123, Arg148, Asp150, 161–166, Ala185, and Gln223 contribute to the NAD(+) site; these read DG, NE, and TAYNKS.

It belongs to the NAD kinase family. A divalent metal cation serves as cofactor.

Its subcellular location is the cytoplasm. It catalyses the reaction NAD(+) + ATP = ADP + NADP(+) + H(+). Functionally, involved in the regulation of the intracellular balance of NAD and NADP, and is a key enzyme in the biosynthesis of NADP. Catalyzes specifically the phosphorylation on 2'-hydroxyl of the adenosine moiety of NAD to yield NADP. The polypeptide is NAD kinase (Enterococcus faecalis (strain ATCC 700802 / V583)).